The primary structure comprises 141 residues: Hemoglobin subunit alpha (141 aa).

Residues 1-141 (VLSAADKANV…VSTVLTSKYR (141 aa)) form the Globin domain. Serine 3 carries the post-translational modification Phosphoserine. 2 positions are modified to N6-succinyllysine: lysine 7 and lysine 11. N6-acetyllysine; alternate is present on lysine 16. Lysine 16 carries the post-translational modification N6-succinyllysine; alternate. N6-succinyllysine is present on lysine 40. Phosphoserine is present on serine 49. Residue histidine 58 participates in O2 binding. Histidine 87 contributes to the heme b binding site. Serine 102 is subject to Phosphoserine. Phosphothreonine is present on threonine 108. At serine 124 the chain carries Phosphoserine. Threonine 134 and threonine 137 each carry phosphothreonine. Serine 138 carries the post-translational modification Phosphoserine.

Belongs to the globin family. Heterotetramer of two alpha chains and two beta chains. Red blood cells.

Involved in oxygen transport from the lung to the various peripheral tissues. In terms of biological role, hemopressin acts as an antagonist peptide of the cannabinoid receptor CNR1. Hemopressin-binding efficiently blocks cannabinoid receptor CNR1 and subsequent signaling. This chain is Hemoglobin subunit alpha (HBA), found in Sus scrofa (Pig).